The primary structure comprises 220 residues: dITP/XTP pyrophosphatase (220 aa).

Substrate is bound at residue 13 to 18 (SHNAGK). Positions 45 and 74 each coordinate Mg(2+). Asp-74 functions as the Proton acceptor in the catalytic mechanism. Substrate-binding positions include Ser-75, 163–166 (FGYD), Lys-186, and 199–200 (HR).

It belongs to the HAM1 NTPase family. In terms of assembly, homodimer. Mg(2+) is required as a cofactor.

It carries out the reaction XTP + H2O = XMP + diphosphate + H(+). It catalyses the reaction dITP + H2O = dIMP + diphosphate + H(+). The catalysed reaction is ITP + H2O = IMP + diphosphate + H(+). In terms of biological role, pyrophosphatase that catalyzes the hydrolysis of nucleoside triphosphates to their monophosphate derivatives, with a high preference for the non-canonical purine nucleotides XTP (xanthosine triphosphate), dITP (deoxyinosine triphosphate) and ITP. Seems to function as a house-cleaning enzyme that removes non-canonical purine nucleotides from the nucleotide pool, thus preventing their incorporation into DNA/RNA and avoiding chromosomal lesions. The chain is dITP/XTP pyrophosphatase from Brucella melitensis biotype 1 (strain ATCC 23456 / CCUG 17765 / NCTC 10094 / 16M).